The following is a 568-amino-acid chain: Putative F-box protein At5g39480 (568 aa).

An F-box domain is found at 9–55 (ACLLLTLPEDVFAVISRFLSPSDICNLILCGKSLPALVDTEKMWLVQ). The segment at 315–337 (TNVLGESSSSKNTTPSQSEIRVS) is disordered. Residues 321 to 332 (SSSSKNTTPSQS) are compositionally biased toward low complexity.

This chain is Putative F-box protein At5g39480, found in Arabidopsis thaliana (Mouse-ear cress).